A 555-amino-acid polypeptide reads, in one-letter code: Formate--tetrahydrofolate ligase (555 aa).

64-71 (TKAGIGKT) lines the ATP pocket.

Belongs to the formate--tetrahydrofolate ligase family.

It carries out the reaction (6S)-5,6,7,8-tetrahydrofolate + formate + ATP = (6R)-10-formyltetrahydrofolate + ADP + phosphate. The protein operates within one-carbon metabolism; tetrahydrofolate interconversion. This Parabacteroides distasonis (strain ATCC 8503 / DSM 20701 / CIP 104284 / JCM 5825 / NCTC 11152) protein is Formate--tetrahydrofolate ligase.